The sequence spans 273 residues: Pyridoxal phosphate homeostasis protein (273 aa).

Residue Ser-6 is modified to Phosphoserine. Lys-47 carries the post-translational modification N6-(pyridoxal phosphate)lysine. Phosphotyrosine is present on Tyr-69. At Lys-125 the chain carries N6-succinyllysine. Phosphoserine occurs at positions 226 and 244. Over residues 251 to 260 (DYSKKTDKPA) the composition is skewed to basic and acidic residues. The interval 251–273 (DYSKKTDKPAAELQAPEEVAQAH) is disordered.

It belongs to the pyridoxal phosphate-binding protein YggS/PROSC family.

Functionally, pyridoxal 5'-phosphate (PLP)-binding protein, which may be involved in intracellular homeostatic regulation of pyridoxal 5'-phosphate (PLP), the active form of vitamin B6. This chain is Pyridoxal phosphate homeostasis protein, found in Bos taurus (Bovine).